The chain runs to 158 residues: Ecotin (158 aa).

The N-terminal stretch at 1-21 (MRLLPLASVTLLSVLCAQAFA) is a signal peptide. Cysteines 67 and 104 form a disulfide.

It belongs to the protease inhibitor I11 (ecotin) family. As to quaternary structure, homodimer.

The protein resides in the periplasm. Functionally, general inhibitor of family S1 serine proteases. The sequence is that of Ecotin from Pseudomonas fluorescens (strain ATCC BAA-477 / NRRL B-23932 / Pf-5).